Here is a 310-residue protein sequence, read N- to C-terminus: MPHDIPVGRSVTVRVPASSANLGPGFDTLGLAVGLYDIVTVEVTASGLTVDVQGEGAGEVPLDGTHLVVRAIREGLRVAHADVPGLAVSCENAIPQSRGLGSSAAAAAAGVCAANALADNALTTDQVIQVVSSFEGHPDNAAASVLGGAVVSWTDTPVDGETAPQYHAIGVDVHPDIRATAFIPDFTASTNAVRRVLPSDVSHVDARFNVSRTAVMTVALRTNPELLWEGTRDRLHQPYRADALSVSAEWVNRLRNRGYAAYLSGAGPTIMVLSTEDLPAEIVDTASSEGLRVITLPIAGPIQVNRKELG.

95-105 contributes to the ATP binding site; the sequence is PQSRGLGSSAA.

The protein belongs to the GHMP kinase family. Homoserine kinase subfamily.

It localises to the cytoplasm. The enzyme catalyses L-homoserine + ATP = O-phospho-L-homoserine + ADP + H(+). Its pathway is amino-acid biosynthesis; L-threonine biosynthesis; L-threonine from L-aspartate: step 4/5. Its function is as follows. Catalyzes the ATP-dependent phosphorylation of L-homoserine to L-homoserine phosphate. This is Homoserine kinase from Corynebacterium kroppenstedtii (strain DSM 44385 / JCM 11950 / CIP 105744 / CCUG 35717).